A 4690-amino-acid chain; its full sequence is Nonribosomal peptide synthetase sidN (4690 aa).

The interval 238 to 656 (ARVRENPGRI…LGRLSSDQIK (419 aa)) is adenylation 1. Residues 779–856 (SSSIPMLQSV…DLDTKAQQAL (78 aa)) enclose the Carrier 1 domain. S816 is modified (O-(pantetheine 4'-phosphoryl)serine). Residues 925-1175 (PGGKAFIQHT…AFGNTMSGRF (251 aa)) are condensation 1. The adenylation 2 stretch occupies residues 1349 to 1760 (EFAQKSPNAI…GRKDDLVKIR (412 aa)). Residues 1889–1965 (PAWCIKHRPL…DLINHLSVKR (77 aa)) form the Carrier 2 domain. At S1926 the chain carries O-(pantetheine 4'-phosphoryl)serine. Positions 2001–2285 (PTTVFQDGML…SERLLESQLV (285 aa)) are condensation 2. An adenylation 3 region spans residues 2464-2869 (TWAKTHPEWK…GRKDEQVKVR (406 aa)). Positions 3002–3079 (RDLTSIEKQI…ELGRMKNALK (78 aa)) constitute a Carrier 3 domain. O-(pantetheine 4'-phosphoryl)serine is present on S3040. The condensation 3 stretch occupies residues 3121–3530 (CMPLQEVLVA…QMESLVTSFT (410 aa)). Residues 3564–3637 (SVLEQQIRDV…KLATHIQTTS (74 aa)) enclose the Carrier 4 domain. S3598 is modified (O-(pantetheine 4'-phosphoryl)serine). The condensation 4 stretch occupies residues 3679 to 4087 (VYPLTPLQAG…FESIRKHPDE (409 aa)). Residues 4119 to 4195 (SAIDQFLDPL…KLCEVAFAKS (77 aa)) enclose the Carrier 5 domain. S4156 bears the O-(pantetheine 4'-phosphoryl)serine mark. Residues 4262 to 4589 (WVFKAENGLD…FNAHLNILWN (328 aa)) form a condensation 5 region.

Belongs to the NRP synthetase family.

It functions in the pathway siderophore biosynthesis. Functionally, nonribosomal peptide synthetase required for the biosynthetis of epichloenin A, an extracellular siderophore that plays a crucial role in endophyte-grass symbioses. SidN assembles epichloenin A by activating and incorporating three trans-anhydromevalonylhydroxyornithine (trans-AMHO), 1 glutamine and 4 glycine moieties. Trans-AMHO is produced from L-ornithine via 2 steps involving a L-ornithine N(5)-monooxygenase and an AHMO-N(5)-transacylase that have still to be identified. The third adenylation domain (A3) of sidN incorporates the hydroxamate groups of the siderophore which forms an octahedral iron complex. The other component amino acids are assembled by sidN adenylation domains A1 and A2. The sequence is that of Nonribosomal peptide synthetase sidN from Epichloe festucae (strain E2368).